The chain runs to 429 residues: Ribosomal RNA small subunit methyltransferase B (429 aa).

S-adenosyl-L-methionine contacts are provided by residues 254–260, Asp277, Asp303, and Asp322; that span reads CAAPGGK. Cys375 acts as the Nucleophile in catalysis.

This sequence belongs to the class I-like SAM-binding methyltransferase superfamily. RsmB/NOP family.

Its subcellular location is the cytoplasm. The catalysed reaction is cytidine(967) in 16S rRNA + S-adenosyl-L-methionine = 5-methylcytidine(967) in 16S rRNA + S-adenosyl-L-homocysteine + H(+). Its function is as follows. Specifically methylates the cytosine at position 967 (m5C967) of 16S rRNA. This Shigella sonnei (strain Ss046) protein is Ribosomal RNA small subunit methyltransferase B.